The following is a 317-amino-acid chain: 4-diphosphocytidyl-2-C-methyl-D-erythritol kinase (317 aa).

The active site involves Lys11. 99 to 109 (PVAAGLAGGST) lines the ATP pocket. Asp141 is a catalytic residue.

The protein belongs to the GHMP kinase family. IspE subfamily.

It carries out the reaction 4-CDP-2-C-methyl-D-erythritol + ATP = 4-CDP-2-C-methyl-D-erythritol 2-phosphate + ADP + H(+). Its pathway is isoprenoid biosynthesis; isopentenyl diphosphate biosynthesis via DXP pathway; isopentenyl diphosphate from 1-deoxy-D-xylulose 5-phosphate: step 3/6. Functionally, catalyzes the phosphorylation of the position 2 hydroxy group of 4-diphosphocytidyl-2C-methyl-D-erythritol. This Trichormus variabilis (strain ATCC 29413 / PCC 7937) (Anabaena variabilis) protein is 4-diphosphocytidyl-2-C-methyl-D-erythritol kinase.